Here is a 151-residue protein sequence, read N- to C-terminus: Large ribosomal subunit protein bL9 (151 aa).

Belongs to the bacterial ribosomal protein bL9 family.

Binds to the 23S rRNA. This Chlorobium limicola (strain DSM 245 / NBRC 103803 / 6330) protein is Large ribosomal subunit protein bL9.